The primary structure comprises 487 residues: Betaine aldehyde dehydrogenase (487 aa).

K(+) contacts are provided by isoleucine 27 and aspartate 93. 149 to 151 (GAW) contributes to the NAD(+) binding site. Catalysis depends on lysine 161, which acts as the Charge relay system. NAD(+) contacts are provided by residues 175–178 (KPSE) and 228–231 (SVPT). Leucine 243 provides a ligand contact to K(+). Residue glutamate 249 is the Proton acceptor of the active site. NAD(+) contacts are provided by glycine 251, cysteine 283, and glutamate 384. Cysteine 283 serves as the catalytic Nucleophile. Cysteine 283 bears the Cysteine sulfenic acid (-SOH) mark. Residues lysine 454 and glycine 457 each contribute to the K(+) site. Glutamate 461 acts as the Charge relay system in catalysis.

The protein belongs to the aldehyde dehydrogenase family. In terms of assembly, dimer of dimers. Requires K(+) as cofactor.

It catalyses the reaction betaine aldehyde + NAD(+) + H2O = glycine betaine + NADH + 2 H(+). It participates in amine and polyamine biosynthesis; betaine biosynthesis via choline pathway; betaine from betaine aldehyde: step 1/1. Its function is as follows. Involved in the biosynthesis of the osmoprotectant glycine betaine. Catalyzes the irreversible oxidation of betaine aldehyde to the corresponding acid. In Brucella anthropi (strain ATCC 49188 / DSM 6882 / CCUG 24695 / JCM 21032 / LMG 3331 / NBRC 15819 / NCTC 12168 / Alc 37) (Ochrobactrum anthropi), this protein is Betaine aldehyde dehydrogenase.